Reading from the N-terminus, the 159-residue chain is Endoribonuclease YbeY (159 aa).

Residues H125, H129, and H135 each contribute to the Zn(2+) site.

Belongs to the endoribonuclease YbeY family. Zn(2+) serves as cofactor.

Its subcellular location is the cytoplasm. Functionally, single strand-specific metallo-endoribonuclease involved in late-stage 70S ribosome quality control and in maturation of the 3' terminus of the 16S rRNA. The chain is Endoribonuclease YbeY from Ligilactobacillus salivarius (strain UCC118) (Lactobacillus salivarius).